Here is a 178-residue protein sequence, read N- to C-terminus: uncharacterized protein (178 aa).

5 helical membrane passes run 1–21 (MISIYLFMAFFIANLLGYGGG), 47–67 (MLALANALPGPIATKIAAYVG), 75–95 (GFLIALIATVVPSALALIVLL), 117–137 (VIAVMMLILTWQIGADGIKAI), and 158–178 (MHPAFLIIAAFLYGGLVIPYL).

The protein belongs to the chromate ion transporter (CHR) (TC 2.A.51) family.

It localises to the cell membrane. This is an uncharacterized protein from Bacillus subtilis (strain 168).